The chain runs to 238 residues: Chromosome partition protein MukE (238 aa).

Residues 206 to 238 (EESSQSSFDLDENEKLSDISAEEQHELELEGDA) form a disordered region. A compositionally biased stretch (basic and acidic residues) spans 218–238 (NEKLSDISAEEQHELELEGDA).

It belongs to the MukE family. As to quaternary structure, interacts, and probably forms a ternary complex, with MukF and MukB. The complex formation is stimulated by calcium or magnesium.

Its subcellular location is the cytoplasm. It is found in the nucleoid. In terms of biological role, involved in chromosome condensation, segregation and cell cycle progression. May participate in facilitating chromosome segregation by condensation DNA from both sides of a centrally located replisome during cell division. Probably acts via its interaction with MukB and MukF. The protein is Chromosome partition protein MukE of Aliivibrio salmonicida (strain LFI1238) (Vibrio salmonicida (strain LFI1238)).